The primary structure comprises 333 residues: Small GTPase-like protein LIP2 (333 aa).

Residues 11-288 are small GTPase-like; the sequence is NKEHMVAPLC…YKYNTLPQHN (278 aa). GTP contacts are provided by residues 29 to 36, 90 to 94, and 160 to 163; these read GDSGVGKS, DVSGH, and NKAD. The span at 242–253 shows a compositional bias: polar residues; that stretch reads SPSSAWSLSHAP. Residues 242–265 are disordered; it reads SPSSAWSLSHAPSQRLDEGTSDED.

The protein belongs to the small GTPase superfamily.

This is Small GTPase-like protein LIP2 from Arabidopsis thaliana (Mouse-ear cress).